A 221-amino-acid chain; its full sequence is DNA replication complex GINS protein SLD5 (221 aa).

Belongs to the GINS4/SLD5 family. As to quaternary structure, component of the GINS complex which is a heterotetramer of gins1/psf1, gins2/psf2, gins3/psf3 and gins4/sld5. Component of the CMG helicase complex, composed of the mcm2-7 complex, the GINS complex and cdc45.

The protein resides in the nucleus. It localises to the chromosome. Its subcellular location is the cytoplasm. In terms of biological role, required for initiation of chromosomal DNA replication. Core component of CDC45-MCM-GINS (CMG) helicase, the molecular machine that unwinds template DNA during replication, and around which the replisome is built. The chain is DNA replication complex GINS protein SLD5 from Xenopus laevis (African clawed frog).